Here is a 211-residue protein sequence, read N- to C-terminus: Imidazole glycerol phosphate synthase subunit HisH (211 aa).

The Glutamine amidotransferase type-1 domain occupies 5–211; it reads SVALLDYGSG…QLLRNWVDSL (207 aa). Cys83 serves as the catalytic Nucleophile. Residues His192 and Glu194 contribute to the active site.

As to quaternary structure, heterodimer of HisH and HisF.

The protein resides in the cytoplasm. It carries out the reaction 5-[(5-phospho-1-deoxy-D-ribulos-1-ylimino)methylamino]-1-(5-phospho-beta-D-ribosyl)imidazole-4-carboxamide + L-glutamine = D-erythro-1-(imidazol-4-yl)glycerol 3-phosphate + 5-amino-1-(5-phospho-beta-D-ribosyl)imidazole-4-carboxamide + L-glutamate + H(+). The catalysed reaction is L-glutamine + H2O = L-glutamate + NH4(+). The protein operates within amino-acid biosynthesis; L-histidine biosynthesis; L-histidine from 5-phospho-alpha-D-ribose 1-diphosphate: step 5/9. Functionally, IGPS catalyzes the conversion of PRFAR and glutamine to IGP, AICAR and glutamate. The HisH subunit catalyzes the hydrolysis of glutamine to glutamate and ammonia as part of the synthesis of IGP and AICAR. The resulting ammonia molecule is channeled to the active site of HisF. This chain is Imidazole glycerol phosphate synthase subunit HisH, found in Nocardia farcinica (strain IFM 10152).